A 117-amino-acid polypeptide reads, in one-letter code: Protein OPG035 (117 aa).

It belongs to the poxviridae OPG035 family.

In terms of biological role, bcl-2-like protein which contributes to virulence by preventing host NF-kappa-B activation in response to pro-inflammatory stimuli such as TNF-alpha or IL1B. In Homo sapiens (Human), this protein is Protein OPG035 (OPG035).